Here is a 248-residue protein sequence, read N- to C-terminus: uncharacterized protein (248 aa).

9-33 is a binding site for NADP(+); the sequence is IITGASSGIGEATAILLAEKGAKLV. Ser141 provides a ligand contact to substrate. Tyr154 functions as the Proton acceptor in the catalytic mechanism.

This sequence belongs to the short-chain dehydrogenases/reductases (SDR) family.

This is an uncharacterized protein from Listeria innocua serovar 6a (strain ATCC BAA-680 / CLIP 11262).